The primary structure comprises 238 residues: Gem-associated protein 8 (238 aa).

A disordered region spans residues 66 to 127 (AGHPWDSQGQ…LESDSDDEVE (62 aa)). 2 stretches are compositionally biased toward polar residues: residues 72-82 (SQGQHMAQQES) and 96-108 (LRNS…STRG). The segment covering 113–127 (CEEEELESDSDDEVE) has biased composition (acidic residues). Serine 122 bears the Phosphoserine mark. Positions 131–164 (SNMEITEELRQYFAQTERHREERRRQQQLDAERL) form a coiled coil.

In terms of assembly, part of the core SMN complex that contains SMN1, GEMIN2/SIP1, DDX20/GEMIN3, GEMIN4, GEMIN5, GEMIN6, GEMIN7, GEMIN8 and STRAP/UNRIP. Part of the SMN-Sm complex that contains SMN1, GEMIN2/SIP1, DDX20/GEMIN3, GEMIN4, GEMIN5, GEMIN6, GEMIN7, GEMIN8, STRAP/UNRIP and the Sm proteins SNRPB, SNRPD1, SNRPD2, SNRPD3, SNRPE, SNRPF and SNRPG. Interacts with GEMIN6; the interaction is direct. Interacts with GEMIN7; the interaction is direct. Interacts with SMN1; the interaction is direct. Interacts with GEMIN4; the interaction is direct. In terms of tissue distribution, widely expressed in embryonic tissues (at protein level).

Its subcellular location is the nucleus. It is found in the gem. The protein resides in the cytoplasm. Its function is as follows. The SMN complex catalyzes the assembly of small nuclear ribonucleoproteins (snRNPs), the building blocks of the spliceosome, and thereby plays an important role in the splicing of cellular pre-mRNAs. Most spliceosomal snRNPs contain a common set of Sm proteins SNRPB, SNRPD1, SNRPD2, SNRPD3, SNRPE, SNRPF and SNRPG that assemble in a heptameric protein ring on the Sm site of the small nuclear RNA to form the core snRNP (Sm core). In the cytosol, the Sm proteins SNRPD1, SNRPD2, SNRPE, SNRPF and SNRPG are trapped in an inactive 6S pICln-Sm complex by the chaperone CLNS1A that controls the assembly of the core snRNP. To assemble core snRNPs, the SMN complex accepts the trapped 5Sm proteins from CLNS1A forming an intermediate. Binding of snRNA inside 5Sm triggers eviction of the SMN complex, thereby allowing binding of SNRPD3 and SNRPB to complete assembly of the core snRNP. The sequence is that of Gem-associated protein 8 (Gemin8) from Mus musculus (Mouse).